Consider the following 367-residue polypeptide: Testis-specific serine/threonine-protein kinase 1 (367 aa).

In terms of domain architecture, Protein kinase spans 12-272 (YLLGINLGEG…IDEILSHCWM (261 aa)). Residues 18–26 (LGEGSYAKV) and lysine 41 contribute to the ATP site. Aspartate 136 functions as the Proton acceptor in the catalytic mechanism. Threonine 174 is modified (phosphothreonine). The segment at 276–367 (ARGSPSVAIN…PQQPPETRAQ (92 aa)) is disordered. A compositionally biased stretch (basic and acidic residues) spans 303 to 314 (GSDKKSATKLEP).

The protein belongs to the protein kinase superfamily. CAMK Ser/Thr protein kinase family. In terms of assembly, interacts with TSSK2. Interacts with HSP90; this interaction stabilizes TSSK1. The cofactor is Mg(2+). Autophosphorylated. In terms of processing, ubiquitinated; HSP90 activity negatively regulates ubiquitination and degradation. In terms of tissue distribution, testis-specific. Present in sperm (at protein level).

It is found in the cytoplasm. The protein localises to the cytoplasmic vesicle. The protein resides in the secretory vesicle. It localises to the acrosome. Its subcellular location is the cell projection. It is found in the cilium. The protein localises to the flagellum. It catalyses the reaction L-seryl-[protein] + ATP = O-phospho-L-seryl-[protein] + ADP + H(+). The enzyme catalyses L-threonyl-[protein] + ATP = O-phospho-L-threonyl-[protein] + ADP + H(+). With respect to regulation, kinase activity is specifically inhibited by 2 classes of compounds: biphenyl compounds (1,1'-(biphenyl-4,4'-diyl)bis(2,2-dihydroxyethanone)) and 1,2,7-trialky-1H-imidazo[4,5-g]quinoxalin-6-one. Activated by phosphorylation on Thr-174 and potentially by autophosphorylation. Functionally, testis-specific serine/threonine-protein kinase required during spermatid development. Phosphorylates 'Ser-288' of TSKS. Involved in the late stages of spermatogenesis, during the reconstruction of the cytoplasm. During spermatogenesis, required for the transformation of a ring-shaped structure around the base of the flagellum originating from the chromatoid body. In Homo sapiens (Human), this protein is Testis-specific serine/threonine-protein kinase 1 (TSSK1B).